A 548-amino-acid polypeptide reads, in one-letter code: Probable 2,3-bisphosphoglycerate-independent phosphoglycerate mutase (548 aa).

Mn(2+) contacts are provided by Asp-20 and Ser-73. Residue Ser-73 is the Phosphoserine intermediate of the active site. Residues His-134, 164-165, Arg-200, Arg-207, 279-282, and Lys-354 contribute to the substrate site; these read RD and RGDR. Residues Asp-422, His-426, Asp-463, His-464, and His-493 each contribute to the Mn(2+) site.

The protein belongs to the BPG-independent phosphoglycerate mutase family. In terms of assembly, monomer. Requires Mn(2+) as cofactor.

It catalyses the reaction (2R)-2-phosphoglycerate = (2R)-3-phosphoglycerate. It participates in carbohydrate degradation; glycolysis; pyruvate from D-glyceraldehyde 3-phosphate: step 3/5. Catalyzes the interconversion of 2-phosphoglycerate and 3-phosphoglycerate. This is Probable 2,3-bisphosphoglycerate-independent phosphoglycerate mutase (gpmI) from Leptospira interrogans serogroup Icterohaemorrhagiae serovar copenhageni (strain Fiocruz L1-130).